A 374-amino-acid chain; its full sequence is Probable inactive patatin-3-Kuras 1 (374 aa).

Positions 1 to 11 are cleaved as a signal peptide; the sequence is MMLATTSSTFA. Residues 20-217 enclose the PNPLA domain; the sequence is LSIDGGGIKG…AAVDPSLLSI (198 aa). The GXGXXG motif lies at 24–29; the sequence is GGGIKG. N-linked (GlcNAc...) asparagine glycosylation is found at Asn-48 and Asn-191. Asp-204 serves as the catalytic Proton acceptor. Residue Asn-257 is glycosylated (N-linked (GlcNAc...) asparagine).

This sequence belongs to the patatin family. Post-translationally, N-glycosylated. Tuber.

It is found in the vacuole. In Solanum tuberosum (Potato), this protein is Probable inactive patatin-3-Kuras 1 (pat3-k1).